The primary structure comprises 510 residues: 2-isopropylmalate synthase (510 aa).

Residues 5 to 267 (LIIFDTTLRD…DTRIDSVHIV (263 aa)) form the Pyruvate carboxyltransferase domain. 4 residues coordinate Mn(2+): Asp14, His202, His204, and Asn238. Residues 392-510 (KLLSLTAHSE…SKLERAHPQV (119 aa)) are regulatory domain.

The protein belongs to the alpha-IPM synthase/homocitrate synthase family. LeuA type 1 subfamily. Homodimer. Requires Mn(2+) as cofactor.

Its subcellular location is the cytoplasm. The enzyme catalyses 3-methyl-2-oxobutanoate + acetyl-CoA + H2O = (2S)-2-isopropylmalate + CoA + H(+). It participates in amino-acid biosynthesis; L-leucine biosynthesis; L-leucine from 3-methyl-2-oxobutanoate: step 1/4. Functionally, catalyzes the condensation of the acetyl group of acetyl-CoA with 3-methyl-2-oxobutanoate (2-ketoisovalerate) to form 3-carboxy-3-hydroxy-4-methylpentanoate (2-isopropylmalate). The sequence is that of 2-isopropylmalate synthase from Nitrosospira multiformis (strain ATCC 25196 / NCIMB 11849 / C 71).